A 280-amino-acid polypeptide reads, in one-letter code: 4-deoxy-L-threo-5-hexosulose-uronate ketol-isomerase (280 aa).

Zn(2+) contacts are provided by H198, H200, E205, and H247.

The protein belongs to the KduI family. It depends on Zn(2+) as a cofactor.

It catalyses the reaction 5-dehydro-4-deoxy-D-glucuronate = 3-deoxy-D-glycero-2,5-hexodiulosonate. It functions in the pathway glycan metabolism; pectin degradation; 2-dehydro-3-deoxy-D-gluconate from pectin: step 4/5. Functionally, catalyzes the isomerization of 5-dehydro-4-deoxy-D-glucuronate to 3-deoxy-D-glycero-2,5-hexodiulosonate. The polypeptide is 4-deoxy-L-threo-5-hexosulose-uronate ketol-isomerase (Bacteroides fragilis (strain YCH46)).